Consider the following 76-residue polypeptide: Large ribosomal subunit protein bL31 (76 aa).

Belongs to the bacterial ribosomal protein bL31 family. Type A subfamily. Part of the 50S ribosomal subunit.

Binds the 23S rRNA. The polypeptide is Large ribosomal subunit protein bL31 (rpmE) (Pelagibacter ubique (strain HTCC1062)).